The chain runs to 205 residues: Holliday junction branch migration complex subunit RuvA (205 aa).

Residues 1 to 64 form a domain I region; sequence MIGKLKGVID…EDMIRLYGFA (64 aa). The tract at residues 65 to 143 is domain II; sequence TQLEREWFRL…AFAGEASGTI (79 aa). The segment at 144-152 is flexible linker; that stretch reads GLKQELGAG. Residues 153 to 205 form a domain III region; the sequence is AAPAPVADAVSALSNLGYSRDQAANAVAAALKETGEGADSAKLIRLGLKELSQ.

This sequence belongs to the RuvA family. In terms of assembly, homotetramer. Forms an RuvA(8)-RuvB(12)-Holliday junction (HJ) complex. HJ DNA is sandwiched between 2 RuvA tetramers; dsDNA enters through RuvA and exits via RuvB. An RuvB hexamer assembles on each DNA strand where it exits the tetramer. Each RuvB hexamer is contacted by two RuvA subunits (via domain III) on 2 adjacent RuvB subunits; this complex drives branch migration. In the full resolvosome a probable DNA-RuvA(4)-RuvB(12)-RuvC(2) complex forms which resolves the HJ.

It localises to the cytoplasm. Its function is as follows. The RuvA-RuvB-RuvC complex processes Holliday junction (HJ) DNA during genetic recombination and DNA repair, while the RuvA-RuvB complex plays an important role in the rescue of blocked DNA replication forks via replication fork reversal (RFR). RuvA specifically binds to HJ cruciform DNA, conferring on it an open structure. The RuvB hexamer acts as an ATP-dependent pump, pulling dsDNA into and through the RuvAB complex. HJ branch migration allows RuvC to scan DNA until it finds its consensus sequence, where it cleaves and resolves the cruciform DNA. The sequence is that of Holliday junction branch migration complex subunit RuvA from Brucella abortus (strain S19).